Consider the following 682-residue polypeptide: Heat shock 70 kDa protein 10, mitochondrial (682 aa).

Residues 1–50 constitute a mitochondrion transit peptide; sequence MATAALLRSIRRREVVSSPFSAYRCLSSSGKASLNSSYLGQNFRSFSRAF. Residues 646-682 form a disordered region; it reads KIGEHMSGGSGGGSAPGGGSEGGSDQAPEAEYEEVKK. The segment covering 651-667 has biased composition (gly residues); that stretch reads MSGGSGGGSAPGGGSEG. Residues 673–682 are compositionally biased toward acidic residues; it reads PEAEYEEVKK.

This sequence belongs to the heat shock protein 70 (TC 1.A.33) family. DnaK subfamily.

The protein resides in the mitochondrion. Functionally, chaperone involved in the maturation of iron-sulfur [Fe-S] cluster-containing proteins. Has a low intrinsic ATPase activity which is markedly stimulated by HSCB and ISU1. In cooperation with other chaperones, Hsp70s are key components that facilitate folding of de novo synthesized proteins, assist translocation of precursor proteins into organelles, and are responsible for degradation of damaged protein under stress conditions. The sequence is that of Heat shock 70 kDa protein 10, mitochondrial from Arabidopsis thaliana (Mouse-ear cress).